The chain runs to 207 residues: Ribosomal RNA small subunit methyltransferase G (207 aa).

Residues Gly73, Leu78, 124-125 (VE), and Arg139 contribute to the S-adenosyl-L-methionine site.

This sequence belongs to the methyltransferase superfamily. RNA methyltransferase RsmG family.

The protein localises to the cytoplasm. It catalyses the reaction guanosine(527) in 16S rRNA + S-adenosyl-L-methionine = N(7)-methylguanosine(527) in 16S rRNA + S-adenosyl-L-homocysteine. In terms of biological role, specifically methylates the N7 position of guanine in position 527 of 16S rRNA. This is Ribosomal RNA small subunit methyltransferase G from Salmonella arizonae (strain ATCC BAA-731 / CDC346-86 / RSK2980).